A 345-amino-acid chain; its full sequence is Anthranilate phosphoribosyltransferase (345 aa).

5-phospho-alpha-D-ribose 1-diphosphate contacts are provided by residues Gly-80, Gly-83 to Asp-84, Thr-88, Asn-90 to Thr-93, Lys-108 to Ser-116, and Ser-120. Gly-80 contacts anthranilate. Residue Ser-92 coordinates Mg(2+). Position 111 (Asn-111) interacts with anthranilate. Arg-166 contacts anthranilate. Positions 229 and 230 each coordinate Mg(2+).

This sequence belongs to the anthranilate phosphoribosyltransferase family. As to quaternary structure, homodimer. It depends on Mg(2+) as a cofactor.

The enzyme catalyses N-(5-phospho-beta-D-ribosyl)anthranilate + diphosphate = 5-phospho-alpha-D-ribose 1-diphosphate + anthranilate. It participates in amino-acid biosynthesis; L-tryptophan biosynthesis; L-tryptophan from chorismate: step 2/5. In terms of biological role, catalyzes the transfer of the phosphoribosyl group of 5-phosphorylribose-1-pyrophosphate (PRPP) to anthranilate to yield N-(5'-phosphoribosyl)-anthranilate (PRA). In Chlorobium phaeobacteroides (strain BS1), this protein is Anthranilate phosphoribosyltransferase.